The chain runs to 71 residues: MGLLGAAIVAGLAAVGGAIAVAIIVKSTIEGVTRQPELKGTLQTLMFIGVPLAEAVPIIAIVMGFLIMGNA.

The next 2 membrane-spanning stretches (helical) occupy residues 5-25 (GAAI…AIIV) and 47-67 (FIGV…GFLI).

The protein belongs to the ATPase C chain family. In terms of assembly, F-type ATPases have 2 components, F(1) - the catalytic core - and F(0) - the membrane proton channel. F(1) has five subunits: alpha(3), beta(3), gamma(1), delta(1), epsilon(1). F(0) has three main subunits: a(1), b(2) and c(10-14). The alpha and beta chains form an alternating ring which encloses part of the gamma chain. F(1) is attached to F(0) by a central stalk formed by the gamma and epsilon chains, while a peripheral stalk is formed by the delta and b chains.

It is found in the cell membrane. Its function is as follows. F(1)F(0) ATP synthase produces ATP from ADP in the presence of a proton or sodium gradient. F-type ATPases consist of two structural domains, F(1) containing the extramembraneous catalytic core and F(0) containing the membrane proton channel, linked together by a central stalk and a peripheral stalk. During catalysis, ATP synthesis in the catalytic domain of F(1) is coupled via a rotary mechanism of the central stalk subunits to proton translocation. Key component of the F(0) channel; it plays a direct role in translocation across the membrane. A homomeric c-ring of between 10-14 subunits forms the central stalk rotor element with the F(1) delta and epsilon subunits. The chain is ATP synthase subunit c from Alkalihalobacillus alcalophilus (Bacillus alcalophilus).